The sequence spans 308 residues: Putative S-adenosyl-L-methionine-dependent methyltransferase Mjls_1073 (308 aa).

S-adenosyl-L-methionine-binding positions include aspartate 133 and 162-163 (DL).

Belongs to the UPF0677 family.

Its function is as follows. Exhibits S-adenosyl-L-methionine-dependent methyltransferase activity. This is Putative S-adenosyl-L-methionine-dependent methyltransferase Mjls_1073 from Mycobacterium sp. (strain JLS).